Consider the following 696-residue polypeptide: Divalent metal transporter 1 (696 aa).

A disordered region spans residues 1 to 31; it reads MHQDNSMRRAINQSRNGGSDSCDINNDREHD. Topologically, residues 1 to 236 are cytoplasmic; that stretch reads MHQDNSMRRA…RSNRLSFMSK (236 aa). Polar residues predominate over residues 11 to 24; it reads INQSRNGGSDSCDI. The helical transmembrane segment at 237–255 threads the bilayer; that stretch reads LKMYFNYFGPGWIVAIAYL. The Vacuolar segment spans residues 256-288; the sequence is DPGNICGNLNVGLIRSDDFINVNSSVKDYTGYR. Residue N278 is glycosylated (N-linked (GlcNAc...) asparagine). A helical transmembrane segment spans residues 289 to 311; sequence LLWVLVYGHILGFIFHTLSMKLG. Residues 312–331 lie on the Cytoplasmic side of the membrane; sequence HITGLDLAALCRKEFSSKFS. A helical transmembrane segment spans residues 332–357; sequence YFLYICVQIAIWGAHLQAIIGVFVAI. Residues 358–362 lie on the Vacuolar side of the membrane; it reads NLILG. A helical membrane pass occupies residues 363 to 382; the sequence is IPVKIAILYTLIEAFAYSFL. Residues 383 to 393 are Cytoplasmic-facing; sequence ENKSLDLLEKV. Residues 394–416 form a helical membrane-spanning segment; that stretch reads LSLLIGILVCCFMFNVFMTPINF. Residues 417 to 435 lie on the Vacuolar side of the membrane; that stretch reads QEVASSILYPRIPKGKLLD. The chain crosses the membrane as a helical span at residues 436-455; the sequence is TMGLLGSVISAHIFYLHSNL. The Cytoplasmic portion of the chain corresponds to 456–475; the sequence is TSKKKPVIYNDRMVKRYNKL. Residues 476–499 traverse the membrane as a helical segment; sequence GTIESGGSLLVSCITNCIIVLTFA. The Vacuolar portion of the chain corresponds to 500-529; it reads EVNISGDDRKADYNLFNAYDVMKKYFGKTS. The N-linked (GlcNAc...) asparagine glycan is linked to N502. Residues 530–546 form a helical membrane-spanning segment; it reads MYIWSFGLLSSGNNASF. At 547–566 the chain is on the cytoplasmic side; sequence MCEYASKSVFEGFLNKNVNP. A helical membrane pass occupies residues 567-585; it reads FFRVIFSRIILFIMLYAYV. Residues 586 to 596 lie on the Vacuolar side of the membrane; the sequence is SYDKYTIDQLS. Residues 597 to 615 traverse the membrane as a helical segment; the sequence is NFINVVQILLLPLAIIPLY. The Cytoplasmic segment spans residues 616-634; that stretch reads RFSIHKNVLGKFAIKGAFK. Residues 635–657 traverse the membrane as a helical segment; sequence YLVFVLVISIIVANFLLTLFDFL. The Vacuolar portion of the chain corresponds to 658 to 662; sequence QYAPS. The helical transmembrane segment at 663–684 threads the bilayer; that stretch reads NLYVIFIFISSIFYLLFIIYFF. The Cytoplasmic segment spans residues 685–696; the sequence is NMPITKTYYKDS.

It belongs to the NRAMP (TC 2.A.55) family.

It is found in the vacuole membrane. It carries out the reaction Fe(2+)(in) = Fe(2+)(out). Iron transporter. Required for parasite development during the blood stages. Required for full pathogenicity. The chain is Divalent metal transporter 1 from Plasmodium yoelii.